A 459-amino-acid polypeptide reads, in one-letter code: tRNA-2-methylthio-N(6)-dimethylallyladenosine synthase (459 aa).

An MTTase N-terminal domain is found at 1–116; it reads MRAHLITYGC…IGKALETNER (116 aa). Positions 10, 46, 79, 148, 152, and 155 each coordinate [4Fe-4S] cluster. Residues 134–367 enclose the Radical SAM core domain; that stretch reads PQGKLQAHLT…IAKQKEWSAR (234 aa). Residues 370–433 enclose the TRAM domain; the sequence is AAKVGTIQEV…PHMLYGRLIG (64 aa).

Belongs to the methylthiotransferase family. MiaB subfamily. Monomer. [4Fe-4S] cluster serves as cofactor.

The protein resides in the cytoplasm. The enzyme catalyses N(6)-dimethylallyladenosine(37) in tRNA + (sulfur carrier)-SH + AH2 + 2 S-adenosyl-L-methionine = 2-methylsulfanyl-N(6)-dimethylallyladenosine(37) in tRNA + (sulfur carrier)-H + 5'-deoxyadenosine + L-methionine + A + S-adenosyl-L-homocysteine + 2 H(+). Catalyzes the methylthiolation of N6-(dimethylallyl)adenosine (i(6)A), leading to the formation of 2-methylthio-N6-(dimethylallyl)adenosine (ms(2)i(6)A) at position 37 in tRNAs that read codons beginning with uridine. The sequence is that of tRNA-2-methylthio-N(6)-dimethylallyladenosine synthase from Deinococcus geothermalis (strain DSM 11300 / CIP 105573 / AG-3a).